The primary structure comprises 975 residues: Glycine dehydrogenase (decarboxylating) (975 aa).

Residue K723 is modified to N6-(pyridoxal phosphate)lysine.

Belongs to the GcvP family. The glycine cleavage system is composed of four proteins: P, T, L and H. The cofactor is pyridoxal 5'-phosphate.

The catalysed reaction is N(6)-[(R)-lipoyl]-L-lysyl-[glycine-cleavage complex H protein] + glycine + H(+) = N(6)-[(R)-S(8)-aminomethyldihydrolipoyl]-L-lysyl-[glycine-cleavage complex H protein] + CO2. Its function is as follows. The glycine cleavage system catalyzes the degradation of glycine. The P protein binds the alpha-amino group of glycine through its pyridoxal phosphate cofactor; CO(2) is released and the remaining methylamine moiety is then transferred to the lipoamide cofactor of the H protein. This is Glycine dehydrogenase (decarboxylating) from Burkholderia mallei (strain NCTC 10247).